A 465-amino-acid chain; its full sequence is Ribulose bisphosphate carboxylase large chain (465 aa).

N6,N6,N6-trimethyllysine is present on Lys4. Positions 113 and 163 each coordinate substrate. Residue Lys165 is the Proton acceptor of the active site. Lys167 contacts substrate. Positions 191, 193, and 194 each coordinate Mg(2+). Residue Lys191 is modified to N6-carboxylysine. Catalysis depends on His284, which acts as the Proton acceptor. The substrate site is built by Arg285, His317, and Ser369.

Belongs to the RuBisCO large chain family. Type I subfamily. Heterohexadecamer of 8 large chains and 8 small chains; disulfide-linked. The disulfide link is formed within the large subunit homodimers. Mg(2+) serves as cofactor. In terms of processing, the disulfide bond which can form in the large chain dimeric partners within the hexadecamer appears to be associated with oxidative stress and protein turnover.

The protein resides in the plastid. The protein localises to the chloroplast. It catalyses the reaction 2 (2R)-3-phosphoglycerate + 2 H(+) = D-ribulose 1,5-bisphosphate + CO2 + H2O. It carries out the reaction D-ribulose 1,5-bisphosphate + O2 = 2-phosphoglycolate + (2R)-3-phosphoglycerate + 2 H(+). Functionally, ruBisCO catalyzes two reactions: the carboxylation of D-ribulose 1,5-bisphosphate, the primary event in carbon dioxide fixation, as well as the oxidative fragmentation of the pentose substrate in the photorespiration process. Both reactions occur simultaneously and in competition at the same active site. The sequence is that of Ribulose bisphosphate carboxylase large chain from Acer saccharum (Sugar maple).